Here is a 294-residue protein sequence, read N- to C-terminus: Acetyl-coenzyme A carboxylase carboxyl transferase subunit beta (294 aa).

The CoA carboxyltransferase N-terminal domain maps to Leu29–Ala294. Positions 33, 36, 52, and 55 each coordinate Zn(2+). Residues Cys33–Cys55 form a C4-type zinc finger.

It belongs to the AccD/PCCB family. In terms of assembly, acetyl-CoA carboxylase is a heterohexamer composed of biotin carboxyl carrier protein (AccB), biotin carboxylase (AccC) and two subunits each of ACCase subunit alpha (AccA) and ACCase subunit beta (AccD). Zn(2+) is required as a cofactor.

Its subcellular location is the cytoplasm. It carries out the reaction N(6)-carboxybiotinyl-L-lysyl-[protein] + acetyl-CoA = N(6)-biotinyl-L-lysyl-[protein] + malonyl-CoA. It participates in lipid metabolism; malonyl-CoA biosynthesis; malonyl-CoA from acetyl-CoA: step 1/1. Functionally, component of the acetyl coenzyme A carboxylase (ACC) complex. Biotin carboxylase (BC) catalyzes the carboxylation of biotin on its carrier protein (BCCP) and then the CO(2) group is transferred by the transcarboxylase to acetyl-CoA to form malonyl-CoA. The chain is Acetyl-coenzyme A carboxylase carboxyl transferase subunit beta from Prochlorococcus marinus (strain NATL2A).